The following is an 832-amino-acid chain: Mechanosensitive cation channel TMEM63B (832 aa).

Residues 1 to 40 are Extracellular-facing; sequence MLPFLLATLGTAALNSSNPKDYCYSARIRSTVLQGLPFGG. The helical transmembrane segment at 41 to 65 threads the bilayer; it reads VPTVLALDFMCFLALLFLFSILRKV. The S-palmitoyl cysteine moiety is linked to residue cysteine 51. Residues 66-145 are Cytoplasmic-facing; sequence AWDYGRLALV…KDDEIRDKCG (80 aa). Positions 86-88 match the Mediates endoplasmic reticulum retention motif; it reads RER. A phosphoserine mark is found at serine 111, serine 113, serine 114, and serine 115. Residue cysteine 126 is the site of S-palmitoyl cysteine attachment. A helical transmembrane segment spans residues 146–178; that stretch reads GDAVHYLSFQRHIIGLLVVVGVLSVGIVLPVNF. The Extracellular segment spans residues 179 to 202; the sequence is SGDLLENNAYSFGRTTIANLKSGN. A helical transmembrane segment spans residues 203-227; that stretch reads NLLWLHTSFAFLYLLLTVYSMRRHT. Residues 228–427 are Cytoplasmic-facing; it reads SKMRYKEDDL…IYWEHLSIRG (200 aa). An intracellular linker IL2; confers mechanosensitivity region spans residues 231-426; that stretch reads RYKEDDLVKR…NIYWEHLSIR (196 aa). 2 S-palmitoyl cysteine lipidation sites follow: cysteine 382 and cysteine 398. A helical membrane pass occupies residues 428 to 457; that stretch reads FIWWLRCLVINVVLFILLFFLTTPAIIITT. Residues 458–472 are Extracellular-facing; that stretch reads MDKFNVTKPVEYLNN. Asparagine 462 carries an N-linked (GlcNAc...) asparagine glycan. A helical transmembrane segment spans residues 473-502; the sequence is PIITQFFPTLLLWCFSALLPTIVYYSAFFE. The Cytoplasmic segment spans residues 503–506; sequence AHWT. The chain crosses the membrane as a helical span at residues 507-543; the sequence is RSGENRTTMHKCYTFLIFMVLLLPSLGLSSLDLFFRW. Topologically, residues 544–566 are extracellular; sequence LFDKKFLAEAAIRFECVFLPDNG. The chain crosses the membrane as a helical span at residues 567–599; it reads AFFVNYVIASAFIGNAMDLLRIPGLLMYMIRLC. Residues 567–599 are gating helix; that stretch reads AFFVNYVIASAFIGNAMDLLRIPGLLMYMIRLC. The Cytoplasmic portion of the chain corresponds to 600–619; sequence LARSAAERRNVKRHQAYEFQ. Residues 620 to 638 form a helical membrane-spanning segment; it reads FGAAYAWMMCVFTVVMTYS. The Extracellular portion of the chain corresponds to 639 to 641; the sequence is ITC. A helical transmembrane segment spans residues 642–666; it reads PIIVPFGLMYMLLKHLVDRYNLYYA. The Cytoplasmic segment spans residues 667–673; the sequence is YLPAKLD. Residues 674-702 traverse the membrane as a helical segment; it reads KKIHSGAVNQVVAAPILCLFWLLFFSTMR. Residues 703-707 are Extracellular-facing; the sequence is TGFLA. A helical transmembrane segment spans residues 708–728; that stretch reads PTSMFTFVVLVITIVICLCHV. S-palmitoyl cysteine attachment occurs at residues cysteine 726 and cysteine 729. Topologically, residues 729-832 are cytoplasmic; it reads CFGHFKYLSA…DSLIENEIHQ (104 aa). 2 disordered regions span residues 748–767 and 776–818; these read TDAV…AVPK and LQDS…DTDF. A compositionally biased stretch (polar residues) spans 749-758; the sequence is DAVSSRSNGR. Low complexity predominate over residues 789-801; that stretch reads PGSSGDEPPSSSS.

This sequence belongs to the CSC1 (TC 1.A.17) family. In terms of assembly, monomer. Interacts with SLC19A2; interaction is required for the phospholipid scramblase activity. In terms of processing, palmitoylation is required for localization to the plasma membrane and stability. In terms of tissue distribution, expressed in cochlear hair cells (at protein level). Highly expressed in the subfornical organ of the brain. Expressed in small intestine. As to expression, brain-specific.

It is found in the cell membrane. The protein resides in the endoplasmic reticulum membrane. The protein localises to the lysosome membrane. It localises to the early endosome membrane. It carries out the reaction Ca(2+)(in) = Ca(2+)(out). It catalyses the reaction Mg(2+)(in) = Mg(2+)(out). The catalysed reaction is K(+)(in) = K(+)(out). The enzyme catalyses Na(+)(in) = Na(+)(out). It carries out the reaction Cs(+)(in) = Cs(+)(out). It catalyses the reaction a 1,2-diacyl-sn-glycero-3-phosphocholine(in) = a 1,2-diacyl-sn-glycero-3-phosphocholine(out). The catalysed reaction is a sphingomyelin(in) = a sphingomyelin(out). Functionally, mechanosensitive cation channel with low conductance and high activation threshold. Osmosensitive cation channel preferentially activated by hypotonic stress. Also acts as a phospholipid scramblase in response to changes in membrane structure: upon changes in membrane curvature and thickness, alters its conformation and translocates phospholipids, such as phosphatidylcholine and sphingomyelin, thereby controlling plasma membrane lipid distribution. Forms a heterodimer with SLC19A2, which mediates phospholipid scramblase activity following Ca(2+) stimulation. Expressed in excitatory neurons of the subfornical organ and functions as a thirst receptor that mediates neuronal response to hyperosmolality to drive thirst and drinking behavior. Facilitates intestinal motility by promoting proliferation of intestinal stem cells. Essential for the baby's first breath and respiration throughout life. Upon lung inflation conducts cation currents in alveolar type 1 and 2 cells triggering lamellar body exocytosis and surfactant secretion into airspace. Acts as an osmosensor in cochlear outer hair cells (OHCs) where it mediates calcium influx and regulatory volume decrease response. Required for the maintenance of OHC morphology, OHC survival and normal hearing. Its function is as follows. Brain-specific osmosensitive calcium channel isoform. The sequence is that of Mechanosensitive cation channel TMEM63B from Mus musculus (Mouse).